The chain runs to 226 residues: CASP-like protein 2BC1 (226 aa).

Topologically, residues 1 to 37 (MRKHIDIVFSRLSGPILNPPPDNNVIPKTDRKLRITE) are cytoplasmic. The helical transmembrane segment at 38 to 58 (VILRFAVVIFALVSAIMVGTA) threads the bilayer. The Extracellular segment spans residues 59–78 (SGTRDLGGGIRIHAHFTLLK). A helical membrane pass occupies residues 79-99 (TLPFLVIVDGILAVYSLLQGL). Residues 100–114 (RCFLSLYMRHILLNK) are Cytoplasmic-facing. Residues 115-135 (ALAWTIFCCDQALAYVIFAAA) traverse the membrane as a helical segment. Residues 136-170 (ASTAETAYISEQGLDELQWIKVCMFFRAYCFKSGA) are Extracellular-facing. Residues 171-191 (GMINAFLAALCMVFVSGMSVF) form a helical membrane-spanning segment. The Cytoplasmic portion of the chain corresponds to 192–226 (HLFRLYGEKRAYGHIAEQVVISEEAAERRNSLNGI).

It belongs to the Casparian strip membrane proteins (CASP) family. Homodimer and heterodimers.

Its subcellular location is the cell membrane. In Picea sitchensis (Sitka spruce), this protein is CASP-like protein 2BC1.